Here is a 134-residue protein sequence, read N- to C-terminus: DNA-binding protein inhibitor ID-2 (134 aa).

Phosphoserine occurs at positions 14 and 25. Positions 23–75 constitute a bHLH domain; the sequence is SRSKTPVDDPMSLLYNMNDCYSKLKELVPSIPQNKKVTKMEILQHVIDYILDL. Residues 30 to 83 are interaction with IFI204; it reads DDPMSLLYNMNDCYSKLKELVPSIPQNKKVTKMEILQHVIDYILDLQIALDSHP. The short motif at 106–115 is the Nuclear export signal element; it reads LNTDISILSL.

In terms of assembly, interacts with GATA4 and NKX2-5. Interacts with NR0B2. Interacts with CLOCK and BMAL1. Interacts with IFI204. Interacts with NEDD9/HEF1. Interacts with ASB4; this interaction promotes ID2 proteasomal degradation. In terms of processing, polyubiquitinated; which is favored by Ifi204 and leads to proteasomal degradation. Ubiquitinated in a ASB4-depedent manner, leading to proteasomal degradation. Post-translationally, phosphorylated in vitro by CDK1, PKA and PKC.

It is found in the cytoplasm. The protein localises to the nucleus. In terms of biological role, transcriptional regulator (lacking a basic DNA binding domain) which negatively regulates the basic helix-loop-helix (bHLH) transcription factors by forming heterodimers and inhibiting their DNA binding and transcriptional activity. Implicated in regulating a variety of cellular processes, including cellular growth, senescence, differentiation, apoptosis, angiogenesis, and neoplastic transformation. Inhibits skeletal muscle and cardiac myocyte differentiation. Regulates the circadian clock by repressing the transcriptional activator activity of the CLOCK-BMAL1 heterodimer. Restricts the CLOCK and BMAL1 localization to the cytoplasm. Plays a role in both the input and output pathways of the circadian clock: in the input component, is involved in modulating the magnitude of photic entrainment and in the output component, contributes to the regulation of a variety of liver clock-controlled genes involved in lipid metabolism. The protein is DNA-binding protein inhibitor ID-2 (Id2) of Mus musculus (Mouse).